Reading from the N-terminus, the 302-residue chain is Dihydroorotate dehydrogenase B (NAD(+)), catalytic subunit (302 aa).

Residues Ser20 and 44-45 (KG) contribute to the FMN site. Residues Lys44 and 68 to 72 (NSVGL) each bind substrate. Residues Asn98 and Asn125 each coordinate FMN. Residue Asn125 coordinates substrate. Cys128 serves as the catalytic Nucleophile. FMN-binding residues include Lys163 and Ile189. 190-191 (NT) serves as a coordination point for substrate. FMN contacts are provided by residues Gly215, 241 to 242 (GG), and 263 to 264 (GT).

This sequence belongs to the dihydroorotate dehydrogenase family. Type 1 subfamily. In terms of assembly, heterotetramer of 2 PyrK and 2 PyrD type B subunits. Requires FMN as cofactor.

It localises to the cytoplasm. The catalysed reaction is (S)-dihydroorotate + NAD(+) = orotate + NADH + H(+). Its pathway is pyrimidine metabolism; UMP biosynthesis via de novo pathway; orotate from (S)-dihydroorotate (NAD(+) route): step 1/1. Catalyzes the conversion of dihydroorotate to orotate with NAD(+) as electron acceptor. The polypeptide is Dihydroorotate dehydrogenase B (NAD(+)), catalytic subunit (pyrD) (Thermoanaerobacter pseudethanolicus (strain ATCC 33223 / 39E) (Clostridium thermohydrosulfuricum)).